The chain runs to 508 residues: Protein DETOXIFICATION 52 (508 aa).

The next 12 helical transmembrane spans lie at 48–68 (ILAA…LGHI), 78–98 (LAIA…ALGM), 122–142 (VLFL…LGKI), 156–176 (AQTY…LHPL), 189–209 (LTLA…FLVS), 222–242 (AAAS…IAGL), 270–290 (IGVC…GLLI), 300–320 (GILI…GLAV), 341–361 (IVAV…AWGV), 368–388 (IFTN…ILGL), 415–437 (INLG…WAAY), and 441–463 (GLWV…VVAT).

It belongs to the multi antimicrobial extrusion (MATE) (TC 2.A.66.1) family. As to expression, detected in the part of the veins in cotyledons of 6-day-old seedlings and the basal parts of the petioles in older plants. Highly expressed in the vascular tissues of hypocotyl in dark-grown seedlings.

It is found in the late endosome membrane. In terms of biological role, may act as a negative regulator of hypocotyl cell elongation in the light. This is Protein DETOXIFICATION 52 from Arabidopsis thaliana (Mouse-ear cress).